We begin with the raw amino-acid sequence, 764 residues long: Ribosomal protein S6 kinase alpha-6 (764 aa).

The tract at residues 1–24 (MLPFAPVEDPWDQEDMEVFGSTSS) is disordered. Residues 93 to 350 (FDLLKVLGQG…VEEVKRHAFF (258 aa)) form the Protein kinase 1 domain. Residues 99 to 107 (LGQGSFGKV) and K125 each bind ATP. D218 (proton acceptor) is an active-site residue. Phosphoserine occurs at positions 252, 392, and 409. Residues 351-420 (ASIDWNKLYK…VATSIAEEYK (70 aa)) enclose the AGC-kinase C-terminal domain. A Protein kinase 2 domain is found at 446-706 (YELKEDIGIG…VLKHPWITQR (261 aa)). ATP is bound by residues 452–460 (IGIGSYSVC) and K475. Catalysis depends on D563, which acts as the Proton acceptor. Residue T601 is modified to Phosphothreonine.

This sequence belongs to the protein kinase superfamily. AGC Ser/Thr protein kinase family. S6 kinase subfamily. In terms of assembly, forms a complex with MAPK3/ERK1 but not with MAPK9 or MAPK14 in serum-starved cells. The cofactor is Mg(2+). Phosphorylated at Ser-252, Ser-392, and Ser-409 in serum-starved cells.

It is found in the cytoplasm. Its subcellular location is the cytosol. The protein resides in the nucleus. It catalyses the reaction L-seryl-[protein] + ATP = O-phospho-L-seryl-[protein] + ADP + H(+). It carries out the reaction L-threonyl-[protein] + ATP = O-phospho-L-threonyl-[protein] + ADP + H(+). Its activity is regulated as follows. Constitutively activated by phosphorylation at Ser-252, Ser-392, and Ser-409 in serum-starved cells. Does not require growth factor stimulation for significant kinase activity. Its function is as follows. Constitutively active serine/threonine-protein kinase that exhibits growth-factor-independent kinase activity and that may participate in p53/TP53-dependent cell growth arrest signaling and play an inhibitory role during embryogenesis. The chain is Ribosomal protein S6 kinase alpha-6 (Rps6ka6) from Mus musculus (Mouse).